We begin with the raw amino-acid sequence, 115 residues long: Putative membrane protein insertion efficiency factor (115 aa).

Residues 81-115 are disordered; that stretch reads DPRPGRCGCKDAGPAVSAGSTEGNPGRRTDGTDPD. Over residues 105–115 the composition is skewed to basic and acidic residues; the sequence is PGRRTDGTDPD.

It belongs to the UPF0161 family.

The protein localises to the cell inner membrane. Functionally, could be involved in insertion of integral membrane proteins into the membrane. The chain is Putative membrane protein insertion efficiency factor from Rhodospirillum rubrum (strain ATCC 11170 / ATH 1.1.1 / DSM 467 / LMG 4362 / NCIMB 8255 / S1).